Reading from the N-terminus, the 167-residue chain is Shikimate kinase (167 aa).

ATP is bound at residue 8–15; it reads GFMGSGKT.

Belongs to the shikimate kinase family.

It localises to the cytoplasm. It carries out the reaction shikimate + ATP = 3-phosphoshikimate + ADP + H(+). The protein operates within metabolic intermediate biosynthesis; chorismate biosynthesis; chorismate from D-erythrose 4-phosphate and phosphoenolpyruvate: step 5/7. This Helicobacter hepaticus (strain ATCC 51449 / 3B1) protein is Shikimate kinase.